Reading from the N-terminus, the 111-residue chain is Cell division protein FtsL (111 aa).

The Cytoplasmic segment spans residues 1 to 26 (MAQARTEFSKVAAPRKLEEMYAQRGD). A helical membrane pass occupies residues 27-47 (LFPYLLAVLVLLTLVSVFHVW). The Periplasmic portion of the chain corresponds to 48 to 111 (SRVRVVDLNL…PTDQQVVVVK (64 aa)). Positions 51–85 (RVVDLNLEVAEVARQLKVAQEEQNRLKLEVASLKT) form a coiled coil.

This sequence belongs to the FtsL family.

The protein resides in the cell inner membrane. Essential cell division protein. The protein is Cell division protein FtsL of Geobacter sulfurreducens (strain ATCC 51573 / DSM 12127 / PCA).